A 313-amino-acid chain; its full sequence is MDVGVSPAKSILAKPLKLLTEEDISQLTREDCRKFLKDKGMRRPSWNKSQAIQQVLSLKALYEPGDDSGAGIFRKILVSQPVNPPRVTTTLIEPSNELEACGRVSYPEDNGACHRMDSPRSAEFSGGSGHFVSEKDGHKTTISPRSPAETSELVGQMTIFYSGKVNVYDGIPPEKARSIMHFAANPIDLPENGIFASSRMISKLISKEKMMELPQKGLEKANSSRDSGMEGQANRKVSLQRYREKRKDRKFSKAKKCPGVASSSLEMFLNCQPRMKAAYSQNLGCTGSPLHSQSPESQTKSPNLSVDLNSEGI.

Residues 118–149 (SPRSAEFSGGSGHFVSEKDGHKTTISPRSPAE) are disordered. The Tify domain maps to 150–185 (TSELVGQMTIFYSGKVNVYDGIPPEKARSIMHFAAN). Disordered stretches follow at residues 220 to 256 (KANS…KAKK) and 281 to 313 (QNLG…SEGI). The Jas signature appears at 232–254 (QANRKVSLQRYREKRKDRKFSKA). The short motif at 234-241 (NRKVSLQR) is the Nuclear localization signal element. The segment covering 243–256 (REKRKDRKFSKAKK) has biased composition (basic residues).

Belongs to the TIFY/JAZ family. In terms of assembly, interacts with AFPH2/NINJA.

It is found in the nucleus. Its function is as follows. Regulates the arrest of dispersed meristematic cells during lamina development. This Arabidopsis thaliana (Mouse-ear cress) protein is Protein TIFY 4A (TIFY4A).